The sequence spans 70 residues: Gene 4.3 protein (70 aa).

The chain is Gene 4.3 protein (4.3) from Escherichia coli (Bacteriophage T3).